Reading from the N-terminus, the 81-residue chain is Small ribosomal subunit protein bS18 (81 aa).

This sequence belongs to the bacterial ribosomal protein bS18 family. In terms of assembly, part of the 30S ribosomal subunit. Forms a tight heterodimer with protein bS6.

Binds as a heterodimer with protein bS6 to the central domain of the 16S rRNA, where it helps stabilize the platform of the 30S subunit. The sequence is that of Small ribosomal subunit protein bS18 from Rubrobacter xylanophilus (strain DSM 9941 / JCM 11954 / NBRC 16129 / PRD-1).